The chain runs to 303 residues: MAKKQWQKIDGIVLLNKPEGVTSNGLLQQVRRVYNAKKAGHTGALDPFATGLLPICLGEATKISGLLLDSDKRYIATLQLGLETDSGDKDGNPLKTIAVPALSKAMLETVFSQFEGDVMQVPPMYSALKHQGKPLYEYARKGIHIERAARPIHIYELKLIDFENTVVRFEVLCSKGTYVRTLGEDIAKALGTVGHLTGLHRTQTGALTGDEMATLEEIELNKDAYLQPLDLPLKHLQAIHLNAKDTDKILHGGKLAVEEPETLLVRFYDPQQRFIGVGEWQQEKQLLKPKRLFNLNPIGDDHS.

D46 functions as the Nucleophile in the catalytic mechanism.

The protein belongs to the pseudouridine synthase TruB family. Type 1 subfamily.

It catalyses the reaction uridine(55) in tRNA = pseudouridine(55) in tRNA. Its function is as follows. Responsible for synthesis of pseudouridine from uracil-55 in the psi GC loop of transfer RNAs. This Hydrogenovibrio crunogenus (strain DSM 25203 / XCL-2) (Thiomicrospira crunogena) protein is tRNA pseudouridine synthase B.